Consider the following 207-residue polypeptide: Transcription factor bHLH149 (207 aa).

A disordered region spans residues 1-25; sequence MVESLFPSIENTGESSRRKKPRISE. Residues 132–181 enclose the bHLH domain; sequence KSRKGLTETNRIKLPAVERKLKILGRLVPGCRKVSVPNLLDEATDYIAAL.

As to quaternary structure, homodimer. Interacts with PRE3.

It localises to the nucleus. In terms of biological role, atypical bHLH transcription factor probably unable to bind DNA. Negatively regulates brassinosteroid signaling. The polypeptide is Transcription factor bHLH149 (BHLH149) (Arabidopsis thaliana (Mouse-ear cress)).